A 196-amino-acid chain; its full sequence is Ribonuclease HII (196 aa).

The 188-residue stretch at 9-196 (GLVCGIDEAG…GPVARQLSLL (188 aa)) folds into the RNase H type-2 domain. A divalent metal cation contacts are provided by Asp-15, Glu-16, and Asp-107.

Belongs to the RNase HII family. The cofactor is Mn(2+). It depends on Mg(2+) as a cofactor.

The protein resides in the cytoplasm. It carries out the reaction Endonucleolytic cleavage to 5'-phosphomonoester.. Functionally, endonuclease that specifically degrades the RNA of RNA-DNA hybrids. This is Ribonuclease HII from Dechloromonas aromatica (strain RCB).